The chain runs to 201 residues: Large ribosomal subunit protein uL4 (201 aa).

The interval 44–68 (KAQKTRSEVAGTTKKSKKQKGGGAR) is disordered.

It belongs to the universal ribosomal protein uL4 family. As to quaternary structure, part of the 50S ribosomal subunit.

Functionally, one of the primary rRNA binding proteins, this protein initially binds near the 5'-end of the 23S rRNA. It is important during the early stages of 50S assembly. It makes multiple contacts with different domains of the 23S rRNA in the assembled 50S subunit and ribosome. In terms of biological role, forms part of the polypeptide exit tunnel. The polypeptide is Large ribosomal subunit protein uL4 (Xanthomonas axonopodis pv. citri (strain 306)).